A 183-amino-acid polypeptide reads, in one-letter code: Ribosome-recycling factor (183 aa).

This sequence belongs to the RRF family.

It localises to the cytoplasm. Responsible for the release of ribosomes from messenger RNA at the termination of protein biosynthesis. May increase the efficiency of translation by recycling ribosomes from one round of translation to another. This Mycoplasmoides gallisepticum (strain R(low / passage 15 / clone 2)) (Mycoplasma gallisepticum) protein is Ribosome-recycling factor.